Reading from the N-terminus, the 612-residue chain is Kelch-like protein 40a (612 aa).

Residues 34 to 101 form the BTB domain; it reads VDCILKIKDK…IYTSDINLTE (68 aa). A BACK domain is found at 136 to 238; that stretch reads CLAIFRLGLL…PTSYFKEKVE (103 aa). Basic residues predominate over residues 266-275; that stretch reads RVKRSSHRKE. Residues 266-290 are disordered; the sequence is RVKRSSHRKEGKSAEFESDDDDEDG. Over residues 281 to 290 the composition is skewed to acidic residues; the sequence is FESDDDDEDG. Kelch repeat units follow at residues 350–402, 403–452, 453–500, 502–547, and 549–604; these read QIFV…EAEN, SIYV…SHKG, LVYV…VHKN, IYVV…ELGG, and LYAI…GVRL.

Belongs to the KLHL40 family. In terms of assembly, component of the BCR(KLHL40) E3 ubiquitin ligase complex. In terms of tissue distribution, expressed in skeletal muscle and heart. Detected, although at much lower levels, in brain, eye and fin.

The protein localises to the cytoplasm. It localises to the myofibril. It is found in the sarcomere. Its subcellular location is the a band. The protein resides in the i band. Substrate-specific adapter of a BCR (BTB-CUL3-RBX1) E3 ubiquitin ligase complex. Required for skeletal muscle development. The polypeptide is Kelch-like protein 40a (klhl40a) (Danio rerio (Zebrafish)).